Here is a 553-residue protein sequence, read N- to C-terminus: Chaperonin GroEL (553 aa).

ATP-binding positions include 29-32, Lys-50, 86-90, Gly-424, and Asp-504; these read TLGP and DGTTT.

This sequence belongs to the chaperonin (HSP60) family. As to quaternary structure, forms a cylinder of 14 subunits composed of two heptameric rings stacked back-to-back. Interacts with the co-chaperonin GroES.

The protein localises to the cytoplasm. The catalysed reaction is ATP + H2O + a folded polypeptide = ADP + phosphate + an unfolded polypeptide.. In terms of biological role, together with its co-chaperonin GroES, plays an essential role in assisting protein folding. The GroEL-GroES system forms a nano-cage that allows encapsulation of the non-native substrate proteins and provides a physical environment optimized to promote and accelerate protein folding. This is Chaperonin GroEL from Koribacter versatilis (strain Ellin345).